A 437-amino-acid chain; its full sequence is UDP-N-acetylmuramate--L-alanine ligase (437 aa).

Glycine 108 to serine 114 is a binding site for ATP.

It belongs to the MurCDEF family.

Its subcellular location is the cytoplasm. It catalyses the reaction UDP-N-acetyl-alpha-D-muramate + L-alanine + ATP = UDP-N-acetyl-alpha-D-muramoyl-L-alanine + ADP + phosphate + H(+). Its pathway is cell wall biogenesis; peptidoglycan biosynthesis. In terms of biological role, cell wall formation. In Staphylococcus aureus (strain MRSA252), this protein is UDP-N-acetylmuramate--L-alanine ligase.